Here is a 101-residue protein sequence, read N- to C-terminus: Pore-forming peptide amoebapore C (101 aa).

The first 24 residues, 1 to 24, serve as a signal peptide directing secretion; sequence MKLFVLLCVFVLCLASQEKQQDRE. The Saposin B-type domain occupies 25–101; it reads IPVLCPVCTS…KLICGLIHAC (77 aa). Cystine bridges form between Cys29–Cys101, Cys32–Cys95, and Cys59–Cys70.

Monomer. Homodimer. Hexamer; formed during insertion in the membrane.

It is found in the cytoplasmic granule. Forms pores in the cell membrane of host cells. Has antibacterial activity against M.luteus, no activity against E.coli. Implicated in the cytolytic activity of the parasite. The protein is Pore-forming peptide amoebapore C of Entamoeba histolytica (strain ATCC 30459 / HM-1:IMSS / ABRM).